The following is a 98-amino-acid chain: Aspartyl/glutamyl-tRNA(Asn/Gln) amidotransferase subunit C (98 aa).

This sequence belongs to the GatC family. Heterotrimer of A, B and C subunits.

It catalyses the reaction L-glutamyl-tRNA(Gln) + L-glutamine + ATP + H2O = L-glutaminyl-tRNA(Gln) + L-glutamate + ADP + phosphate + H(+). The catalysed reaction is L-aspartyl-tRNA(Asn) + L-glutamine + ATP + H2O = L-asparaginyl-tRNA(Asn) + L-glutamate + ADP + phosphate + 2 H(+). Functionally, allows the formation of correctly charged Asn-tRNA(Asn) or Gln-tRNA(Gln) through the transamidation of misacylated Asp-tRNA(Asn) or Glu-tRNA(Gln) in organisms which lack either or both of asparaginyl-tRNA or glutaminyl-tRNA synthetases. The reaction takes place in the presence of glutamine and ATP through an activated phospho-Asp-tRNA(Asn) or phospho-Glu-tRNA(Gln). This Roseiflexus castenholzii (strain DSM 13941 / HLO8) protein is Aspartyl/glutamyl-tRNA(Asn/Gln) amidotransferase subunit C.